The sequence spans 236 residues: Syntaxin-8 (236 aa).

The Cytoplasmic portion of the chain corresponds to 1-215; that stretch reads MAPDPWFSTY…MVDRKSASCG (215 aa). The stretch at 42-65 forms a coiled coil; sequence VTIRALLQNLKEKIALLKDLLLRA. A t-SNARE coiled-coil homology domain is found at 145 to 207; it reads QKIIQEQDAG…RNETRRVNMV (63 aa). A Phosphoserine modification is found at serine 160. The helical; Anchor for type IV membrane protein transmembrane segment at 216-232 threads the bilayer; the sequence is MIMVILLLLVAIVVVAV. The Vesicular segment spans residues 233 to 236; sequence WPTN.

Belongs to the syntaxin family. Forms a SNARE complex with STX7, VTI1B and VAMP8 which functions in the homotypic fusion of late endosomes. Part of the SNARE core complex containing STX7, VAMP8 and VTI1B. Interacts with VAMP8. Interacts with HECTD3. Interacts with TPC1. Post-translationally, ubiquitinated by HECTD3. In terms of tissue distribution, highly expressed in heart. Also found in brain, kidney, liver, lung, placenta, skeletal muscle, spleen and pancreas.

It localises to the membrane. Vesicle trafficking protein that functions in the early secretory pathway, possibly by mediating retrograde transport from cis-Golgi membranes to the ER. The protein is Syntaxin-8 (STX8) of Homo sapiens (Human).